We begin with the raw amino-acid sequence, 34 residues long: Beta-theraphotoxin-Pmu1a (34 aa).

Intrachain disulfides connect cysteine 3/cysteine 18, cysteine 10/cysteine 23, and cysteine 17/cysteine 30. Leucine 34 carries the post-translational modification Leucine amide.

The protein belongs to the neurotoxin 10 (Hwtx-1) family. 34 (Jztx-26) subfamily. As to expression, expressed by the venom gland.

Its subcellular location is the secreted. Its function is as follows. Spider venom neurotoxin that blocks voltage-gated sodium channels Nav1.3/SCN3A and Nav1.8/SCN10A in human (IC(50)=2 uM and IC(50)=4 uM, respectively) and rat (IC(50)=2 uM and IC(50)=2.5 uM, respectively). The polypeptide is Beta-theraphotoxin-Pmu1a (Pterinochilus murinus (Mombasa golden starburst baboon spider)).